A 182-amino-acid polypeptide reads, in one-letter code: CDP-diacylglycerol--glycerol-3-phosphate 3-phosphatidyltransferase (182 aa).

Over 2–12 the chain is Cytoplasmic; sequence QFNIPTLLTLF. The helical transmembrane segment at 13–37 threads the bilayer; the sequence is RVILIPFFVVVFYLPFAWAPMVSAL. Topologically, residues 38–60 are periplasmic; sequence IFCIAAITDWFDGFLARRWNQST. A helical transmembrane segment spans residues 61–81; it reads RFGAFLDPVADKVLVAIAMVL. The Cytoplasmic portion of the chain corresponds to 82–86; that stretch reads VTEHY. A helical transmembrane segment spans residues 87-107; sequence HSWWVTLPAATMIAREIIISA. Residues 108–145 are Periplasmic-facing; the sequence is LREWMAELGKRSSVAVSWIGKVKTTAQMVALAWLLWRP. Residues 146–168 form a helical membrane-spanning segment; that stretch reads NIWVEYAGIALFFVAAVLTLWSM. At 169–181 the chain is on the cytoplasmic side; it reads LQYLSAARGDLLD.

Belongs to the CDP-alcohol phosphatidyltransferase class-I family.

The protein resides in the cell inner membrane. It carries out the reaction a CDP-1,2-diacyl-sn-glycerol + sn-glycerol 3-phosphate = a 1,2-diacyl-sn-glycero-3-phospho-(1'-sn-glycero-3'-phosphate) + CMP + H(+). Its pathway is phospholipid metabolism; phosphatidylglycerol biosynthesis; phosphatidylglycerol from CDP-diacylglycerol: step 1/2. Catalyzes the conversion of cytidine diphosphate diacylglycerol (CDP-DG) and glycerol 3-phosphate into phosphatidylglycerol. Essential for the synthesis of anionic phospholipids, thereby playing a role in balancing the ratio of zwitterionic and anionic phospholipids, which is thought to be important for normal membrane function. The sequence is that of CDP-diacylglycerol--glycerol-3-phosphate 3-phosphatidyltransferase from Salmonella paratyphi A (strain ATCC 9150 / SARB42).